Here is a 59-residue protein sequence, read N- to C-terminus: Large ribosomal subunit protein bL32 (59 aa).

The interval 1-20 is disordered; sequence MAVQQNKKSRSRKGMRRSHD. Residues 7-19 show a composition bias toward basic residues; that stretch reads KKSRSRKGMRRSH.

It belongs to the bacterial ribosomal protein bL32 family.

The sequence is that of Large ribosomal subunit protein bL32 from Nitratidesulfovibrio vulgaris (strain ATCC 29579 / DSM 644 / CCUG 34227 / NCIMB 8303 / VKM B-1760 / Hildenborough) (Desulfovibrio vulgaris).